A 1171-amino-acid polypeptide reads, in one-letter code: MENNLKTCPKEDGDFVSDKIKFKIEEEDDDGIPPDSLERMDFKSEQEDMKQTDSGGERAGLGGTGCSCKPPGKYLSAESEDDYGALFSQYSSTLYDVAMEAVTQSLLSSRNMSSRKKSPAWKHFFISPRDSTKAICMYCVKEFSRGKNEKDLSTSCLMRHVRRAHPTVLIQENGSVSAVSSFPSPSLLLPPQPADAGDLSTILSPIKLVQKVASKIPSPDRITEESVSVVSSEEISSDMSVSEKCGREEALVGSSPHLPALHYDEPAENLAEKSLPLPKSTSGSRRRSAVWKHFYLSPLDNSKAVCIHCMNEFSRGKNGKDLGTSCLIRHMWRAHRAIVLQENGGTGIPPLYSTPPTLLPSLLPPEGELSSVSSSPVKPVRESPSASSSPDRLTEDLQSHLNPGDGLMEDVAAFSSSDDIGEASASSPEKQQADGLSPRLFESGAIFQQNKKVMKRLKSEVWHHFSLAPMDSLKAECRYCGCAISRGKKGDVGTSCLMRHLYRRHPEVVGSQKGFLGASLANSPYATLASAESSSSKLTDLPTVVTKNNQVMFPVNSKKTSKLWNHFSICSADSTKVVCLHCGRTISRGKKPTNLGTSCLLRHLQRFHSNVLKTEVSETARPSSPDTRVPRGTELSGASSFDDTNEKFYDSHPVAKKITSLIAEMIALDLQPYSFVDNVGFNRLLEYLKPQYSLPAPSYFSRTAIPGMYDNVKQIIMSHLKEAESGVIHFTSGIWMSNQTREYLTLTAHWVSFESPARPRCDDHHCSALLDVSQVDCDYSGNSIQKQLECWWEAWVTSTGLQVGITVTDNASIGKTLNEGEHSSVQCFSHTVNLIVSEAIKSQRMVQNLLSLARKICERVHRSPKAKEKLAELQREYALPQHHLIQDVPSKWSTSFHMLERLIEQKRAINEMSVECNFRELISCDQWEVMQSVCRALKPFEAASREMSTQMSTLSQVIPMVHILNRKVEMLFEETMGIDTMLRSLKEAMVSRLSATLHDPRYVFATLLDPRYKASLFTEEEAEQYKQDLIRELELMNSTSEDVAASHRCDAGSPSKDSAAEENLWSLVAKVKKKDPREKLPEAMVLAYLEEEVLEHSCDPLTYWNLKKASWPGLSALAVRFLGCPPSIVPSEKLFNTPTENGSLGQSRLMMEHFEKLIFLKVNLPLIYFQY.

A disordered region spans residues 25–62 (EEEDDDGIPPDSLERMDFKSEQEDMKQTDSGGERAGLG). The span at 36–51 (SLERMDFKSEQEDMKQ) shows a compositional bias: basic and acidic residues. Lys-43 participates in a covalent cross-link: Glycyl lysine isopeptide (Lys-Gly) (interchain with G-Cter in SUMO2). 2 consecutive BED-type zinc fingers follow at residues 115 to 172 (RKKS…LIQE) and 285 to 342 (RRRS…VLQE). Residues Cys-136, Cys-139, His-160, His-165, Cys-306, Cys-309, His-330, and His-335 each contribute to the Zn(2+) site. The segment covering 362 to 385 (LLPPEGELSSVSSSPVKPVRESPS) has biased composition (low complexity). Positions 362–405 (LLPPEGELSSVSSSPVKPVRESPSASSSPDRLTEDLQSHLNPGD) are disordered. 2 BED-type zinc fingers span residues 456–512 (RLKS…VGSQ) and 558–615 (KKTS…LKTE). Zn(2+)-binding residues include Cys-477 and Cys-480. Lys-489 is covalently cross-linked (Glycyl lysine isopeptide (Lys-Gly) (interchain with G-Cter in SUMO2)). His-500, His-505, Cys-579, Cys-582, His-603, and His-608 together coordinate Zn(2+). A disordered region spans residues 614–640 (TEVSETARPSSPDTRVPRGTELSGASS). Ser-624 bears the Phosphoserine mark. Residues 1086–1171 (LAYLEEEVLE…VNLPLIYFQY (86 aa)) form a required for homodimerization and nuclear accumulation region.

Homodimer; via C-terminus. Interacts with MYH9. Interacts with SAFB/SAFB1. As to expression, expressed in testis, heart, lung, and weakly expressed in brain, liver, muscle, placenta and small intestine. Expressed in the retina, found in the cone photoreceptors, Mueller cells, cone pedicles and in the innermost retinal layer.

It is found in the nucleus. It localises to the cytoplasm. Its subcellular location is the photoreceptor inner segment. Functionally, transcriptional regulator that binds to poly-guanine tracts in gene promoters and activates transcription. Able to bind single- and double-stranded DNA and RNA. The chain is Zinc finger BED domain-containing protein 4 (ZBED4) from Homo sapiens (Human).